A 359-amino-acid polypeptide reads, in one-letter code: UDP-N-acetylglucosamine--N-acetylmuramyl-(pentapeptide) pyrophosphoryl-undecaprenol N-acetylglucosamine transferase (359 aa).

UDP-N-acetyl-alpha-D-glucosamine-binding positions include Thr15 to Gly17, Asn127, Arg166, Ser191, Ile245, Ala264 to Glu269, and Gln290.

It belongs to the glycosyltransferase 28 family. MurG subfamily.

The protein localises to the cell inner membrane. It catalyses the reaction di-trans,octa-cis-undecaprenyl diphospho-N-acetyl-alpha-D-muramoyl-L-alanyl-D-glutamyl-meso-2,6-diaminopimeloyl-D-alanyl-D-alanine + UDP-N-acetyl-alpha-D-glucosamine = di-trans,octa-cis-undecaprenyl diphospho-[N-acetyl-alpha-D-glucosaminyl-(1-&gt;4)]-N-acetyl-alpha-D-muramoyl-L-alanyl-D-glutamyl-meso-2,6-diaminopimeloyl-D-alanyl-D-alanine + UDP + H(+). It functions in the pathway cell wall biogenesis; peptidoglycan biosynthesis. Functionally, cell wall formation. Catalyzes the transfer of a GlcNAc subunit on undecaprenyl-pyrophosphoryl-MurNAc-pentapeptide (lipid intermediate I) to form undecaprenyl-pyrophosphoryl-MurNAc-(pentapeptide)GlcNAc (lipid intermediate II). In Pseudomonas putida (strain ATCC 47054 / DSM 6125 / CFBP 8728 / NCIMB 11950 / KT2440), this protein is UDP-N-acetylglucosamine--N-acetylmuramyl-(pentapeptide) pyrophosphoryl-undecaprenol N-acetylglucosamine transferase.